Here is a 579-residue protein sequence, read N- to C-terminus: Alpha-glucosidase (579 aa).

D212 functions as the Nucleophile in the catalytic mechanism. The active-site Proton donor is the E269.

Belongs to the glycosyl hydrolase 13 family.

The catalysed reaction is Hydrolysis of terminal, non-reducing (1-&gt;4)-linked alpha-D-glucose residues with release of alpha-D-glucose.. In Schizosaccharomyces pombe (strain 972 / ATCC 24843) (Fission yeast), this protein is Alpha-glucosidase (mal1).